Here is a 132-residue protein sequence, read N- to C-terminus: Small ribosomal subunit protein uS8c (132 aa).

Belongs to the universal ribosomal protein uS8 family. Part of the 30S ribosomal subunit.

It localises to the plastid. Its subcellular location is the chloroplast. Functionally, one of the primary rRNA binding proteins, it binds directly to 16S rRNA central domain where it helps coordinate assembly of the platform of the 30S subunit. The sequence is that of Small ribosomal subunit protein uS8c (rps8) from Rhodomonas salina (Cryptomonas salina).